Here is a 273-residue protein sequence, read N- to C-terminus: Dermonecrotic toxin LruSicTox-alphaIC1a (273 aa).

Histidine 5 is a catalytic residue. Residues glutamate 25 and aspartate 27 each coordinate Mg(2+). The Nucleophile role is filled by histidine 41. 2 disulfide bridges follow: cysteine 45–cysteine 51 and cysteine 47–cysteine 190. Aspartate 85 lines the Mg(2+) pocket.

Belongs to the arthropod phospholipase D family. Class II subfamily. The cofactor is Mg(2+). In terms of tissue distribution, expressed by the venom gland.

Its subcellular location is the secreted. It catalyses the reaction an N-(acyl)-sphingosylphosphocholine = an N-(acyl)-sphingosyl-1,3-cyclic phosphate + choline. The enzyme catalyses an N-(acyl)-sphingosylphosphoethanolamine = an N-(acyl)-sphingosyl-1,3-cyclic phosphate + ethanolamine. The catalysed reaction is a 1-acyl-sn-glycero-3-phosphocholine = a 1-acyl-sn-glycero-2,3-cyclic phosphate + choline. It carries out the reaction a 1-acyl-sn-glycero-3-phosphoethanolamine = a 1-acyl-sn-glycero-2,3-cyclic phosphate + ethanolamine. Functionally, dermonecrotic toxins cleave the phosphodiester linkage between the phosphate and headgroup of certain phospholipids (sphingolipid and lysolipid substrates), forming an alcohol (often choline) and a cyclic phosphate. This toxin acts on sphingomyelin (SM). It may also act on ceramide phosphoethanolamine (CPE), lysophosphatidylcholine (LPC) and lysophosphatidylethanolamine (LPE), but not on lysophosphatidylserine (LPS), and lysophosphatidylglycerol (LPG). It acts by transphosphatidylation, releasing exclusively cyclic phosphate products as second products. Induces dermonecrosis, hemolysis, increased vascular permeability, edema, inflammatory response, and platelet aggregation. This Loxosceles rufescens (Mediterranean recluse spider) protein is Dermonecrotic toxin LruSicTox-alphaIC1a.